A 179-amino-acid chain; its full sequence is ATP synthase subunit delta (179 aa).

Belongs to the ATPase delta chain family. In terms of assembly, F-type ATPases have 2 components, F(1) - the catalytic core - and F(0) - the membrane proton channel. F(1) has five subunits: alpha(3), beta(3), gamma(1), delta(1), epsilon(1). F(0) has three main subunits: a(1), b(2) and c(10-14). The alpha and beta chains form an alternating ring which encloses part of the gamma chain. F(1) is attached to F(0) by a central stalk formed by the gamma and epsilon chains, while a peripheral stalk is formed by the delta and b chains.

The protein resides in the cell inner membrane. Functionally, f(1)F(0) ATP synthase produces ATP from ADP in the presence of a proton or sodium gradient. F-type ATPases consist of two structural domains, F(1) containing the extramembraneous catalytic core and F(0) containing the membrane proton channel, linked together by a central stalk and a peripheral stalk. During catalysis, ATP synthesis in the catalytic domain of F(1) is coupled via a rotary mechanism of the central stalk subunits to proton translocation. This protein is part of the stalk that links CF(0) to CF(1). It either transmits conformational changes from CF(0) to CF(1) or is implicated in proton conduction. The sequence is that of ATP synthase subunit delta from Burkholderia orbicola (strain MC0-3).